A 447-amino-acid chain; its full sequence is ATP-dependent 6-phosphofructokinase (447 aa).

Residues Gly-88, 154 to 155 (RG), and 179 to 182 (GDGT) each bind ATP. Asp-180 provides a ligand contact to Mg(2+). Residues 208 to 210 (TVD), 253 to 255 (MGR), Glu-315, and 368 to 371 (YIIR) each bind substrate. Residue Asp-210 is the Proton acceptor of the active site.

The protein belongs to the phosphofructokinase type A (PFKA) family. PPi-dependent PFK group II subfamily. Atypical ATP-dependent clade 'X' sub-subfamily. In terms of assembly, homodimer. Mg(2+) serves as cofactor.

The protein localises to the cytoplasm. It carries out the reaction beta-D-fructose 6-phosphate + ATP = beta-D-fructose 1,6-bisphosphate + ADP + H(+). The protein operates within carbohydrate degradation; glycolysis; D-glyceraldehyde 3-phosphate and glycerone phosphate from D-glucose: step 3/4. Functionally, catalyzes the phosphorylation of D-fructose 6-phosphate to fructose 1,6-bisphosphate by ATP, the first committing step of glycolysis. This is ATP-dependent 6-phosphofructokinase from Borreliella burgdorferi (strain ATCC 35210 / DSM 4680 / CIP 102532 / B31) (Borrelia burgdorferi).